The following is a 232-amino-acid chain: Ribonuclease 3 (232 aa).

The RNase III domain occupies 2 to 135 (IKALEDDLSQ…FIGALYLDQG (134 aa)). Residue Glu48 participates in Mg(2+) binding. The active site involves Asp52. Residues Asp121 and Glu124 each contribute to the Mg(2+) site. Residue Glu124 is part of the active site. The 70-residue stretch at 161 to 230 (DHKSELQELL…ANQALQLLRR (70 aa)) folds into the DRBM domain.

Belongs to the ribonuclease III family. Homodimer. Requires Mg(2+) as cofactor.

It localises to the cytoplasm. The enzyme catalyses Endonucleolytic cleavage to 5'-phosphomonoester.. Functionally, digests double-stranded RNA. Involved in the processing of primary rRNA transcript to yield the immediate precursors to the large and small rRNAs (23S and 16S). Processes some mRNAs, and tRNAs when they are encoded in the rRNA operon. Processes pre-crRNA and tracrRNA of type II CRISPR loci if present in the organism. This is Ribonuclease 3 from Pediococcus pentosaceus (strain ATCC 25745 / CCUG 21536 / LMG 10740 / 183-1w).